A 133-amino-acid chain; its full sequence is Ribosome-binding factor A (133 aa).

It belongs to the RbfA family. Monomer. Binds 30S ribosomal subunits, but not 50S ribosomal subunits or 70S ribosomes.

It is found in the cytoplasm. Its function is as follows. One of several proteins that assist in the late maturation steps of the functional core of the 30S ribosomal subunit. Associates with free 30S ribosomal subunits (but not with 30S subunits that are part of 70S ribosomes or polysomes). Required for efficient processing of 16S rRNA. May interact with the 5'-terminal helix region of 16S rRNA. This Citrobacter koseri (strain ATCC BAA-895 / CDC 4225-83 / SGSC4696) protein is Ribosome-binding factor A.